Consider the following 215-residue polypeptide: WAT1-related protein At3g28060 (215 aa).

The next 5 membrane-spanning stretches (helical) occupy residues 48–68, 82–102, 117–137, 146–166, and 176–196; these read IIIG…AVAY, FALA…VSLF, IMLI…VVES, VFLA…GAIF, and VIGG…FHIA. Residues 65-186 form the EamA domain; sequence AVAYIVQTHI…IGGTLISIGF (122 aa).

This sequence belongs to the drug/metabolite transporter (DMT) superfamily. Plant drug/metabolite exporter (P-DME) (TC 2.A.7.4) family.

The protein resides in the membrane. In Arabidopsis thaliana (Mouse-ear cress), this protein is WAT1-related protein At3g28060.